A 395-amino-acid chain; its full sequence is Phosphopentomutase (395 aa).

Residues D16, D289, H294, D330, H331, and H342 each contribute to the Mn(2+) site.

The protein belongs to the phosphopentomutase family. The cofactor is Mn(2+).

It localises to the cytoplasm. It carries out the reaction 2-deoxy-alpha-D-ribose 1-phosphate = 2-deoxy-D-ribose 5-phosphate. The enzyme catalyses alpha-D-ribose 1-phosphate = D-ribose 5-phosphate. It participates in carbohydrate degradation; 2-deoxy-D-ribose 1-phosphate degradation; D-glyceraldehyde 3-phosphate and acetaldehyde from 2-deoxy-alpha-D-ribose 1-phosphate: step 1/2. Functionally, isomerase that catalyzes the conversion of deoxy-ribose 1-phosphate (dRib-1-P) and ribose 1-phosphate (Rib-1-P) to deoxy-ribose 5-phosphate (dRib-5-P) and ribose 5-phosphate (Rib-5-P), respectively. The sequence is that of Phosphopentomutase from Geobacillus kaustophilus (strain HTA426).